The chain runs to 349 residues: MNKEELFDVTVIGGGPAGLYSAFYSGLREMKTKIIEFQPHLGGKIHVYPEKMIWDIGGLPPITGAKLIEQLVEQGLTFQPEVVLNEKVESITRDEYGTFLLTTSSGQQHFSKTVIIATGSGILKPQKLAIEGAERFEVSNLNYTVKSLKHFKDKTVIVSGGGNSAIDWANELEPLAKKVYVTYRKEALSGHEAQITQLLNSSVTCLLNTSITKLIAGENHEAIERVELTNHETGEISYLSIDEVIINHGYERDMTLLENSELNIEMIDNYFIAGNANSESSIPGLYAAGDILKHDGKLHLIAGAFHDAGNAVNKAKQFIQPDASEYGMVSSHNDVFKKRNRELMKQMIE.

Positions 36, 44, 48, 88, 123, 290, and 331 each coordinate FAD.

Belongs to the ferredoxin--NADP reductase type 2 family. Homodimer. FAD serves as cofactor.

It catalyses the reaction 2 reduced [2Fe-2S]-[ferredoxin] + NADP(+) + H(+) = 2 oxidized [2Fe-2S]-[ferredoxin] + NADPH. This chain is Ferredoxin--NADP reductase 1, found in Bacillus cytotoxicus (strain DSM 22905 / CIP 110041 / 391-98 / NVH 391-98).